The sequence spans 275 residues: MVVLLCLCVLLWEEAHGWGFKNGIFHNSIWLEQAAGVYHREARAGRYKLTYAEAKAVCEFEGGRLATYKQLEAARKIGFHVCAAGWMAKGRVGYPIVKPGPNCGFGKTGIIDYGIRLNRSERWDAYCYNPHAKECGGVFTDPKRIFKSPGFPNEYDDNQVCYWHIRLKYGQRIHLSFLDFDLEHDPGCLADYVEIYDSYDDVHGFVGRYCGDELPEDIISTGNVMTLKFLSDASVTAGGFQIKYVTVDPASKSSQAKNTSTTGNKKFLPGRFSHL.

Positions 1–17 (MVVLLCLCVLLWEEAHG) are cleaved as a signal peptide. In terms of domain architecture, Link spans 36–129 (GVYHREARAG…SERWDAYCYN (94 aa)). 3 disulfide bridges follow: Cys-58-Cys-127, Cys-82-Cys-103, and Cys-135-Cys-161. Asn-118 carries N-linked (GlcNAc...) asparagine glycosylation. The 113-residue stretch at 135–247 (CGGVFTDPKR…GGFQIKYVTV (113 aa)) folds into the CUB domain. 5 residues coordinate Ca(2+): Glu-183, Asp-191, Asp-232, Ser-234, and Val-235. The cysteines at positions 188 and 210 are disulfide-linked. Residues 253-264 (SSQAKNTSTTGN) show a composition bias toward polar residues. A disordered region spans residues 253–275 (SSQAKNTSTTGNKKFLPGRFSHL). An N-linked (GlcNAc...) asparagine glycan is attached at Asn-258.

Interacts (via Link domain) with inter-alpha-inhibitor (I-alpha-I) component bikunin. Interacts with ITIH2/HC2; this interaction is required for transesterification of the HC to hyaluronan. Interacts (via Link and CUB domains) with ITIH1. Chondroitin sulfate may be required for the stability of the complex. Interacts (via Link domain) with various C-X-C and C-C chemokines including PF4, CXCL8, CXCL11, CXCL12, CCL2, CCL7, CCL19, CCL21, and CCL27; this interaction interferes with chemokine binding to glycosaminoglycans. Interacts (primarily via Link domain) with BMP2; this interaction is inhibited by hyaluronan. Interacts (via both Link and CUB domains) with TNFSF11. Interacts (via CUB domain) with FN1 (via type III repeats 9-14); this interaction enhances fibronectin fibril assembly. TNFAIP6 may act as a bridging molecule between FN1 and THBS1. As to expression, expressed in epiphyseal and metaphyseal bone marrow of both the femur and tibia (at protein level).

It localises to the secreted. Functionally, major regulator of extracellular matrix organization during tissue remodeling. Catalyzes the transfer of a heavy chain (HC) from inter-alpha-inhibitor (I-alpha-I) complex to hyaluronan. Cleaves the ester bond between the C-terminus of the HC and GalNAc residue of the chondroitin sulfate chain in I-alpha-I complex followed by transesterification of the HC to hyaluronan. In the process, potentiates the antiprotease function of I-alpha-I complex through release of free bikunin. Acts as a catalyst in the formation of hyaluronan-HC oligomers and hyaluronan-rich matrix surrounding the cumulus cell-oocyte complex, a necessary step for oocyte fertilization. Assembles hyaluronan in pericellular matrices that serve as platforms for receptor clustering and signaling. Enables binding of hyaluronan deposited on the surface of macrophages to LYVE1 on lymphatic endothelium and facilitates macrophage extravasation. Alters hyaluronan binding to functionally latent CD44 on vascular endothelium, switching CD44 into an active state that supports leukocyte rolling. Modulates the interaction of chemokines with extracellular matrix components and proteoglycans on endothelial cell surface, likely preventing chemokine gradient formation. In a negative feedback mechanism, may limit excessive neutrophil recruitment at inflammatory sites by antagonizing the association of CXCL8 with glycosaminoglycans on vascular endothelium. Has a role in osteogenesis and bone remodeling. Inhibits BMP2-dependent differentiation of mesenchymal stem cell to osteoblasts. Protects against bone erosion during inflammation by inhibiting TNFSF11/RANKL-dependent osteoclast activation. The protein is Tumor necrosis factor-inducible gene 6 protein (Tnfaip6) of Mus musculus (Mouse).